The following is a 305-amino-acid chain: tRNA-cytidine(32) 2-sulfurtransferase (305 aa).

Positions 1–20 are disordered; sequence MTAVLPLPHPLADPAPRDPR. Residues 59-64 carry the PP-loop motif motif; the sequence is SGGKDS. 3 residues coordinate [4Fe-4S] cluster: C134, C137, and C225. A compositionally biased stretch (low complexity) spans 282-293; that stretch reads DAPPDLAPDPGA. The tract at residues 282–305 is disordered; it reads DAPPDLAPDPGAWLTASDATHDSD.

Belongs to the TtcA family. As to quaternary structure, homodimer. It depends on Mg(2+) as a cofactor. [4Fe-4S] cluster is required as a cofactor.

The protein resides in the cytoplasm. The catalysed reaction is cytidine(32) in tRNA + S-sulfanyl-L-cysteinyl-[cysteine desulfurase] + AH2 + ATP = 2-thiocytidine(32) in tRNA + L-cysteinyl-[cysteine desulfurase] + A + AMP + diphosphate + H(+). It functions in the pathway tRNA modification. In terms of biological role, catalyzes the ATP-dependent 2-thiolation of cytidine in position 32 of tRNA, to form 2-thiocytidine (s(2)C32). The sulfur atoms are provided by the cysteine/cysteine desulfurase (IscS) system. This chain is tRNA-cytidine(32) 2-sulfurtransferase, found in Xanthomonas oryzae pv. oryzae (strain PXO99A).